We begin with the raw amino-acid sequence, 405 residues long: Adenosylhomocysteinase (405 aa).

Positions 113 and 138 each coordinate substrate. 139–141 (TTT) is an NAD(+) binding site. Substrate is bound by residues Lys-168 and Asp-172. NAD(+)-binding positions include Asn-173, 202-207 (GYGWCG), Glu-225, Asn-260, 281-283 (AGH), and Asn-327.

This sequence belongs to the adenosylhomocysteinase family. It depends on NAD(+) as a cofactor.

The protein localises to the cytoplasm. It carries out the reaction S-adenosyl-L-homocysteine + H2O = L-homocysteine + adenosine. Its pathway is amino-acid biosynthesis; L-homocysteine biosynthesis; L-homocysteine from S-adenosyl-L-homocysteine: step 1/1. In terms of biological role, may play a key role in the regulation of the intracellular concentration of adenosylhomocysteine. This is Adenosylhomocysteinase from Archaeoglobus fulgidus (strain ATCC 49558 / DSM 4304 / JCM 9628 / NBRC 100126 / VC-16).